Consider the following 344-residue polypeptide: Putative voltage-gated potassium channel subunit beta (344 aa).

NADP(+) contacts are provided by Trp-33, Asp-62, Tyr-67, Ser-167, Gln-193, Trp-222, Ser-223, Pro-224, Leu-225, Lys-233, Arg-243, Gly-301, Ser-303, Gln-307, Glu-310, and Asn-311. Tyr-67 (proton donor/acceptor) is an active-site residue.

The protein belongs to the shaker potassium channel beta subunit family. As to quaternary structure, forms heteromultimeric complexes with potassium channel alpha subunits.

It is found in the cytoplasm. Its subcellular location is the nucleus. Probable accessory potassium channel protein which modulates the activity of the pore-forming alpha subunit. The polypeptide is Putative voltage-gated potassium channel subunit beta (Schizosaccharomyces pombe (strain 972 / ATCC 24843) (Fission yeast)).